Here is a 727-residue protein sequence, read N- to C-terminus: MDQKSDSAGKCPVAHTAPRGRSNRDWWPDQLDVQVLHRHSGLSDPLGNTFNYAEEFKKLDLDALKRDLRALMTDSQDWWPADFGHYGGLFIRMAWHSAGTYRITDGRGGAGQGQQRFAPLNSWPDNANLDKARRLLWPIKQKYGNRISWADLLILTGNVALESMGFKTFGFAGGRVDVWEPEELFWGPEGTWLGDERYSGERQLSEPLAAVQMGLIYVNPEGPNGNPDPVAAARDIRETFARMAMNDEETVALIAGGHTFGKTHGAGDPSFIGADPEGGAIEDQGLGWKSTFGTGVGKDAITGGPEVTWSQTPTRWSNHFFENLFNHEWELTKSPAGAYQWKAKNAEATIPDAYDPSRKHVPTRLTTDLSLRFDPAYEKISRRFLENPDEFADAFARAWFKLTHRDMGPKVRYLGPEVPAEDLIWQDVIPAVDHRLVDETDIAGLKAKIIASGLSVQELVSTAWASASTFRGSDKRGGANGARIRLAPQKDWEVNRPAQLARVLSVLEGIQRDFNAAQTDGKKISLADLIVLAGGAAVEKAAKAGGHDITVPFTPGRMDASEAQTDAASFAALEPRADGFRNYVSTTRQQFMKPEEALVDRAQLLTLTAPEMTVLVGGLRVLKAGEPKHGVFTSRPEALTNDFFVNLLDMGTQWSPIEGEEGVYEGRDRRTGAARWTGTRVDLIFGSHSQLRAFAEVYAQSDAREKFVKDFVAAWTKVMNADRFDLV.

Residues Met1–Arg24 form a disordered region. The tryptophyl-tyrosyl-methioninium (Trp-Tyr) (with M-243) cross-link spans Trp95–Tyr217. The Proton acceptor role is filled by His96. Positions Tyr217 to Met243 form a cross-link, tryptophyl-tyrosyl-methioninium (Tyr-Met) (with W-95). His258 is a heme b binding site.

The protein belongs to the peroxidase family. Peroxidase/catalase subfamily. As to quaternary structure, homodimer or homotetramer. Heme b is required as a cofactor. Formation of the three residue Trp-Tyr-Met cross-link is important for the catalase, but not the peroxidase activity of the enzyme.

The enzyme catalyses H2O2 + AH2 = A + 2 H2O. It carries out the reaction 2 H2O2 = O2 + 2 H2O. Functionally, bifunctional enzyme with both catalase and broad-spectrum peroxidase activity. The chain is Catalase-peroxidase from Rhizobium meliloti (strain 1021) (Ensifer meliloti).